Consider the following 233-residue polypeptide: 2-C-methyl-D-erythritol 4-phosphate cytidylyltransferase (233 aa).

It belongs to the IspD/TarI cytidylyltransferase family. IspD subfamily.

It catalyses the reaction 2-C-methyl-D-erythritol 4-phosphate + CTP + H(+) = 4-CDP-2-C-methyl-D-erythritol + diphosphate. It participates in isoprenoid biosynthesis; isopentenyl diphosphate biosynthesis via DXP pathway; isopentenyl diphosphate from 1-deoxy-D-xylulose 5-phosphate: step 2/6. Functionally, catalyzes the formation of 4-diphosphocytidyl-2-C-methyl-D-erythritol from CTP and 2-C-methyl-D-erythritol 4-phosphate (MEP). In Carboxydothermus hydrogenoformans (strain ATCC BAA-161 / DSM 6008 / Z-2901), this protein is 2-C-methyl-D-erythritol 4-phosphate cytidylyltransferase.